Reading from the N-terminus, the 444-residue chain is Zeaxanthin 4-ketolase (444 aa).

A disordered region spans residues 408–444; sequence VAGGSSSGGGGEGGKPGAGEHGLLQRQRQLAPVGVMA. Residues 412-427 are compositionally biased toward gly residues; the sequence is SSSGGGGEGGKPGAGE.

It catalyses the reaction all-trans-adonixanthin + 2 AH2 + 2 O2 = all-trans-(3S,3'S)-astaxanthin + 2 A + 3 H2O. The catalysed reaction is all-trans-zeaxanthin + 2 AH2 + 2 O2 = all-trans-adonixanthin + 2 A + 3 H2O. The enzyme catalyses echinenone + 2 AH2 + 2 O2 = canthaxanthin + 2 A + 3 H2O. It carries out the reaction all-trans-beta-carotene + 2 AH2 + 2 O2 = echinenone + 2 A + 3 H2O. It participates in carotenoid biosynthesis; astaxanthin biosynthesis. Functionally, involved in the biosynthesis of ketocarotenoids which are powerful anti-oxidative molecules. Catalyzes the conversion of zeaxanthin to astaxanthin via adonixanthin. Catalyzes the conversion of beta-carotene to canthaxanthin via echinenone. This chain is Zeaxanthin 4-ketolase, found in Chlamydomonas reinhardtii (Chlamydomonas smithii).